We begin with the raw amino-acid sequence, 99 residues long: Protein SPIRAL1-like 5 (99 aa).

The span at 1–12 shows a compositional bias: gly residues; it reads MSRGGSFGGGQS. A disordered region spans residues 1–99; that stretch reads MSRGGSFGGG…SSLGYLFGDK (99 aa). The segment covering 27-39 has biased composition (pro residues); sequence TPAPPVAPKPAPP. Positions 56–73 are enriched in polar residues; the sequence is KISNNNYQRVQGQNSGNF. Ser-58 bears the Phosphoserine mark.

The protein belongs to the SPIRAL1 family. In terms of tissue distribution, expressed exclusively in stems and flowers.

In terms of biological role, acts redundantly with SPR1 in maintaining the cortical microtubules organization essential for anisotropic cell growth. The chain is Protein SPIRAL1-like 5 (SP1L5) from Arabidopsis thaliana (Mouse-ear cress).